The following is a 391-amino-acid chain: UPF0229 protein BCB4264_A0587 (391 aa).

Positions 1 to 16 are enriched in polar residues; sequence MGEENQPNYTISQENW. Disordered regions lie at residues 1 to 31 and 80 to 117; these read MGEE…RHQE and HVGQ…GDAA. A compositionally biased stretch (basic and acidic residues) spans 21–31; it reads KGYDDQQRHQE. Gly residues predominate over residues 98–115; it reads GSGGQKQKGPGKGQGAGD.

It belongs to the UPF0229 family.

The chain is UPF0229 protein BCB4264_A0587 from Bacillus cereus (strain B4264).